The primary structure comprises 133 residues: Putative nickel-responsive regulator (133 aa).

4 residues coordinate Ni(2+): His-74, His-85, His-87, and Cys-93.

This sequence belongs to the transcriptional regulatory CopG/NikR family. Ni(2+) serves as cofactor.

Transcriptional regulator. This chain is Putative nickel-responsive regulator, found in Saccharolobus islandicus (strain Y.N.15.51 / Yellowstone #2) (Sulfolobus islandicus).